We begin with the raw amino-acid sequence, 251 residues long: Small ribosomal subunit protein uS4c (251 aa).

S4 RNA-binding domains lie at 110-170 (MRLD…KLVN) and 189-251 (RTLA…QFSE).

It belongs to the universal ribosomal protein uS4 family. In terms of assembly, part of the 30S ribosomal subunit. Contacts protein S5. The interaction surface between S4 and S5 is involved in control of translational fidelity.

The protein resides in the plastid. The protein localises to the chloroplast. Its function is as follows. One of the primary rRNA binding proteins, it binds directly to 16S rRNA where it nucleates assembly of the body of the 30S subunit. With S5 and S12 plays an important role in translational accuracy. In Tetradesmus obliquus (Green alga), this protein is Small ribosomal subunit protein uS4c (rps4).